The chain runs to 113 residues: Ribosome-binding factor A (113 aa).

This sequence belongs to the RbfA family. Monomer. Binds 30S ribosomal subunits, but not 50S ribosomal subunits or 70S ribosomes.

The protein resides in the cytoplasm. Functionally, one of several proteins that assist in the late maturation steps of the functional core of the 30S ribosomal subunit. Associates with free 30S ribosomal subunits (but not with 30S subunits that are part of 70S ribosomes or polysomes). Required for efficient processing of 16S rRNA. May interact with the 5'-terminal helix region of 16S rRNA. This chain is Ribosome-binding factor A, found in Mycoplasmopsis agalactiae (strain NCTC 10123 / CIP 59.7 / PG2) (Mycoplasma agalactiae).